The primary structure comprises 300 residues: Acetylglutamate kinase (300 aa).

Residues 73-74 (GG), arginine 95, and asparagine 197 each bind substrate.

It belongs to the acetylglutamate kinase family. ArgB subfamily.

It is found in the cytoplasm. It carries out the reaction N-acetyl-L-glutamate + ATP = N-acetyl-L-glutamyl 5-phosphate + ADP. It functions in the pathway amino-acid biosynthesis; L-arginine biosynthesis; N(2)-acetyl-L-ornithine from L-glutamate: step 2/4. Its function is as follows. Catalyzes the ATP-dependent phosphorylation of N-acetyl-L-glutamate. The sequence is that of Acetylglutamate kinase from Bordetella bronchiseptica (strain ATCC BAA-588 / NCTC 13252 / RB50) (Alcaligenes bronchisepticus).